Reading from the N-terminus, the 110-residue chain is Putative membrane protein insertion efficiency factor (110 aa).

Belongs to the UPF0161 family.

The protein resides in the cell inner membrane. Its function is as follows. Could be involved in insertion of integral membrane proteins into the membrane. This chain is Putative membrane protein insertion efficiency factor, found in Campylobacter hominis (strain ATCC BAA-381 / DSM 21671 / CCUG 45161 / LMG 19568 / NCTC 13146 / CH001A).